A 685-amino-acid chain; its full sequence is Probable glucan endo-1,3-beta-glucosidase btgC (685 aa).

Disordered stretches follow at residues 1-96, 119-168, and 180-202; these read MSGP…NLGP, GIDA…RDSY, and PAGQ…SPYQ. The Cytoplasmic portion of the chain corresponds to 1 to 312; it reads MSGPHRSFSF…PTPGGGSRKR (312 aa). Composition is skewed to polar residues over residues 47-61 and 73-90; these read SARS…SSGF and GQNS…TTPG. Residues 313-333 form a helical; Signal-anchor for type II membrane protein membrane-spanning segment; that stretch reads GWIVGLALAFIVVGAIVGGAV. Residues 334–685 are Extracellular-facing; that stretch reads GGTLGNRENE…IPDCGGKTAA (352 aa). A disordered region spans residues 335–369; sequence GTLGNRENEAPDTTKSASSDTESNGDLNKDSSEIK. Residues 345-360 are compositionally biased toward polar residues; sequence PDTTKSASSDTESNGD. Residues asparagine 405, asparagine 428, and asparagine 456 are each glycosylated (N-linked (GlcNAc...) asparagine). Glutamate 488 (proton donor) is an active-site residue. Residue glutamate 587 is the Nucleophile of the active site. N-linked (GlcNAc...) asparagine glycosylation is present at asparagine 632.

This sequence belongs to the glycosyl hydrolase 17 family.

Its subcellular location is the cell membrane. The enzyme catalyses Hydrolysis of (1-&gt;3)-beta-D-glucosidic linkages in (1-&gt;3)-beta-D-glucans.. Its function is as follows. Glucanases play a role in cell expansion during growth, in cell-cell fusion during mating, and in spore release during sporulation. This enzyme may be involved in beta-glucan degradation. Active on laminarin and lichenan. This Aspergillus oryzae (strain ATCC 42149 / RIB 40) (Yellow koji mold) protein is Probable glucan endo-1,3-beta-glucosidase btgC (btgC).